A 240-amino-acid chain; its full sequence is Adenylate dimethylallyltransferase (240 aa).

It belongs to the isopentenyl transferase family.

The catalysed reaction is dimethylallyl diphosphate + AMP = N(6)-(dimethylallyl)adenosine 5'-phosphate + diphosphate. Functionally, transfers dimethylallyl groups to AMP as part of the biosynthesis of cytokinin phytohormones. The protein is Adenylate dimethylallyltransferase (izt) of Agrobacterium tumefaciens (strain Ach5).